Consider the following 451-residue polypeptide: Molybdate-anion transporter (451 aa).

The next 12 helical transmembrane spans lie at 1 to 21, 45 to 65, 79 to 99, 130 to 150, 180 to 200, 201 to 221, 251 to 271, 281 to 301, 316 to 336, 346 to 366, 378 to 398, and 410 to 430; these read MLVT…VLEF, YDFY…GPYL, IAII…VSVP, FVLM…FSCF, NGGI…WLGL, GPAS…VLVI, VLLL…FIFL, APLG…SSLY, VLCL…FSTA, LLAF…MRFL, GVLN…LLVL, and MFSL…SLFT.

Belongs to the major facilitator superfamily.

The protein localises to the cell membrane. Mediates high-affinity intracellular uptake of the rare oligo-element molybdenum. The sequence is that of Molybdate-anion transporter (mfsd5) from Xenopus laevis (African clawed frog).